The sequence spans 413 residues: Phosphoglycerate kinase (413 aa).

Residues 24–26 (DFN), Arg39, 62–65 (HLSR), Arg123, and Arg165 each bind substrate. ATP-binding positions include Lys216, Glu343, and 369–372 (GGDS).

This sequence belongs to the phosphoglycerate kinase family. In terms of assembly, monomer.

It localises to the cytoplasm. The enzyme catalyses (2R)-3-phosphoglycerate + ATP = (2R)-3-phospho-glyceroyl phosphate + ADP. It participates in carbohydrate degradation; glycolysis; pyruvate from D-glyceraldehyde 3-phosphate: step 2/5. The polypeptide is Phosphoglycerate kinase (Mycoplasmoides gallisepticum (strain R(low / passage 15 / clone 2)) (Mycoplasma gallisepticum)).